Here is a 418-residue protein sequence, read N- to C-terminus: Putative L-glutamine:3-amino-2,3-dideoxy-scyllo-inosose aminotransferase (418 aa).

Lys-199 carries the N6-(pyridoxal phosphate)lysine modification.

It belongs to the DegT/DnrJ/EryC1 family. L-glutamine:2-deoxy-scyllo-inosose/scyllo-inosose aminotransferase subfamily. Pyridoxal 5'-phosphate is required as a cofactor.

It carries out the reaction 3-amino-2,3-dideoxy-scyllo-inosose + L-glutamine = 2-deoxystreptamine + 2-oxoglutaramate. It participates in metabolic intermediate biosynthesis; 2-deoxystreptamine biosynthesis; 2-deoxystreptamine from D-glucose 6-phosphate: step 4/4. Its pathway is antibiotic biosynthesis; gentamicin biosynthesis. Functionally, catalyzes the transamination of 3-amino-2,3-dideoxy-scyllo-inosose (amino-DOI) into 2-deoxystreptamine (DOS). This Micromonospora echinospora (Micromonospora purpurea) protein is Putative L-glutamine:3-amino-2,3-dideoxy-scyllo-inosose aminotransferase (gtmD).